Here is a 309-residue protein sequence, read N- to C-terminus: Aspartate carbamoyltransferase catalytic subunit (309 aa).

Carbamoyl phosphate contacts are provided by Arg55 and Thr56. Lys85 contributes to the L-aspartate binding site. Carbamoyl phosphate is bound by residues Arg106, His135, and Gln138. L-aspartate-binding residues include Arg168 and Arg230. Carbamoyl phosphate contacts are provided by Leu268 and Pro269.

It belongs to the aspartate/ornithine carbamoyltransferase superfamily. ATCase family. As to quaternary structure, heterododecamer (2C3:3R2) of six catalytic PyrB chains organized as two trimers (C3), and six regulatory PyrI chains organized as three dimers (R2).

The catalysed reaction is carbamoyl phosphate + L-aspartate = N-carbamoyl-L-aspartate + phosphate + H(+). It participates in pyrimidine metabolism; UMP biosynthesis via de novo pathway; (S)-dihydroorotate from bicarbonate: step 2/3. Its function is as follows. Catalyzes the condensation of carbamoyl phosphate and aspartate to form carbamoyl aspartate and inorganic phosphate, the committed step in the de novo pyrimidine nucleotide biosynthesis pathway. The sequence is that of Aspartate carbamoyltransferase catalytic subunit from Photobacterium profundum (strain SS9).